The primary structure comprises 349 residues: Phosphate acetyltransferase (349 aa).

This sequence belongs to the phosphate acetyltransferase and butyryltransferase family.

Its subcellular location is the cytoplasm. The catalysed reaction is acetyl-CoA + phosphate = acetyl phosphate + CoA. The protein operates within metabolic intermediate biosynthesis; acetyl-CoA biosynthesis; acetyl-CoA from acetate: step 2/2. The sequence is that of Phosphate acetyltransferase (pta) from Rickettsia typhi (strain ATCC VR-144 / Wilmington).